Reading from the N-terminus, the 122-residue chain is Lectin A (122 aa).

A Ca(2+)-binding site is contributed by Tyr-38. An alpha-D-galactoside is bound by residues Glu-44, Gln-57, and Asp-96. Residues Asp-96, Thr-100, Asp-103, and Asn-104 each coordinate Ca(2+). Residue Asp-103 participates in an alpha-D-galactoside binding.

The protein belongs to the LecA/PllA lectin family. In terms of assembly, homotetramer.

Lectin that specifically binds alpha-galactoside-terminating glycoconjugates. Shows high apparent binding to the alpha-Gal epitope (Gal-alpha-1,3-Gal-beta-1,4-GlcNAc terminating glycans) as well as to Gal-alpha-1,4-GlcNAc and Gal-alpha-1,3-GalNAc. Gal-alpha-1,3-GalNAc may be one natural ligand bound by PllA both in the nematode symbiont and in infected insects. The chain is Lectin A from Photorhabdus laumondii subsp. laumondii (strain DSM 15139 / CIP 105565 / TT01) (Photorhabdus luminescens subsp. laumondii).